Consider the following 715-residue polypeptide: Macrolide export ATP-binding/permease protein MacB (715 aa).

Residues Ile-4–Lys-245 enclose the ABC transporter domain. Gly-40–Thr-47 serves as a coordination point for ATP. The disordered stretch occupies residues Ala-229 to Met-251. 4 consecutive transmembrane segments (helical) span residues Ala-277 to Ile-297, Leu-592 to Met-612, Gln-639 to Gly-659, and Ile-681 to Trp-701.

Belongs to the ABC transporter superfamily. Macrolide exporter (TC 3.A.1.122) family. As to quaternary structure, homodimer.

It localises to the cell inner membrane. In terms of biological role, non-canonical ABC transporter that contains transmembrane domains (TMD), which form a pore in the inner membrane, and an ATP-binding domain (NBD), which is responsible for energy generation. Confers resistance against macrolides. The polypeptide is Macrolide export ATP-binding/permease protein MacB (Syntrophobacter fumaroxidans (strain DSM 10017 / MPOB)).